A 125-amino-acid polypeptide reads, in one-letter code: Calcitonin gene-related peptide 1 (125 aa).

The first 25 residues, 1-25, serve as a signal peptide directing secretion; that stretch reads MVMLKISSFLAVYALVVCQMDSFQA. Positions 26-77 are excised as a propeptide; that stretch reads APVRPGLESITDRVTLSDYEARRLLNALVKDFIQMTAEELEQASEGNSVTAQ. Cys-81 and Cys-86 are joined by a disulfide. Phe-116 is subject to Phenylalanine amide. The propeptide occupies 122–125; the sequence is SVQI.

It belongs to the calcitonin family.

The protein resides in the secreted. Functionally, CGRP1/CALCA is a peptide hormone that induces vasodilation mediated by the CALCRL-RAMP1 receptor complex. Dilates a variety of vessels including the coronary, cerebral and systemic vasculature. Its abundance in the CNS also points toward a neurotransmitter or neuromodulator role. It also elevates platelet cAMP. CGRP1 can also bind and activate CALCR-RAMP1 (AMYR1) receptor complex. The polypeptide is Calcitonin gene-related peptide 1 (CALCA) (Gallus gallus (Chicken)).